Consider the following 212-residue polypeptide: Cytidylate kinase (212 aa).

7–15 contributes to the ATP binding site; sequence GPAASGKGT.

Belongs to the cytidylate kinase family. Type 1 subfamily.

The protein resides in the cytoplasm. It catalyses the reaction CMP + ATP = CDP + ADP. The enzyme catalyses dCMP + ATP = dCDP + ADP. The chain is Cytidylate kinase from Bradyrhizobium sp. (strain ORS 278).